Consider the following 186-residue polypeptide: Centromere protein M (186 aa).

Its subcellular location is the nucleus. The protein resides in the chromosome. It is found in the centromere. Probable component of a centromeric complex involved in assembly of kinetochore proteins, mitotic progression and chromosome segregation. The protein is Centromere protein M (cenpm) of Danio rerio (Zebrafish).